The primary structure comprises 135 residues: uncharacterized protein (135 aa).

This is an uncharacterized protein from Aquifex aeolicus (strain VF5).